A 183-amino-acid polypeptide reads, in one-letter code: MRKDKLKDQYRINEEIRSEEVRVVGNNVEQRIYPISEALRMAGELELDLIEISPTAVPPVCKIFDYQKFIFQQKKHQKEQKVKLSKIVVKEIRFGPQTDEHDYSFKLKHAKSFLEEGNKVKAYVFFRGRSILFKEQGEILLLRFANDLEDYGKVEQLPILEGKKMIITLAPKKVEIISRRLKR.

The protein belongs to the IF-3 family. In terms of assembly, monomer.

It localises to the cytoplasm. IF-3 binds to the 30S ribosomal subunit and shifts the equilibrium between 70S ribosomes and their 50S and 30S subunits in favor of the free subunits, thus enhancing the availability of 30S subunits on which protein synthesis initiation begins. In Azobacteroides pseudotrichonymphae genomovar. CFP2, this protein is Translation initiation factor IF-3.